The following is a 1828-amino-acid chain: Chromodomain-helicase-DNA-binding protein 2 (1828 aa).

Residues 1–14 (MMRNKDKSQEEDSS) show a composition bias toward basic and acidic residues. Residues 1–243 (MMRNKDKSQE…EDDDFETDSD (243 aa)) are disordered. The segment covering 15–75 (LHSNASSHSA…SESESAGSKS (61 aa)) has biased composition (low complexity). Basic and acidic residues-rich tracts occupy residues 81–101 (EAKE…KMWE), 115–128 (SRQE…KEEA), and 146–155 (KKQEKWKQEP). Basic residues predominate over residues 175–204 (VKARRPVPRRTVPKPRVKKQPKTQRGKRKK). Phosphoserine is present on residues serine 207 and serine 208. Residues 234-243 (EDDDFETDSD) are compositionally biased toward acidic residues. Threonine 240 is modified (phosphothreonine). Position 242 is a phosphoserine (serine 242). Chromo domains are found at residues 261–353 (ETIE…QWLG) and 378–456 (QIVE…IPTR). One can recognise a Helicase ATP-binding domain in the interval 496–666 (AHSWCKNNSV…WSLLHFIMPE (171 aa)). 509–516 (DEMGLGKT) contacts ATP. Positions 617 to 620 (DEAH) match the DEAH box motif. The 152-residue stretch at 795–946 (LLDKLLTRLR…HLVIQRMDTT (152 aa)) folds into the Helicase C-terminal domain. Disordered regions lie at residues 1030–1124 (EDEE…RSVR), 1331–1462 (VTGG…DEDD), 1556–1638 (HKKR…ADRG), and 1680–1828 (HMDA…VRKT). Basic and acidic residues predominate over residues 1037–1065 (ERPHKDWDEIIPEEQRKKVEEEERQKELE). A phosphoserine mark is found at serine 1085, serine 1087, serine 1365, and serine 1386. Basic and acidic residues predominate over residues 1347 to 1371 (KKENKVPRLKEEHGIELSSPRHSDN). Basic and acidic residues-rich tracts occupy residues 1396-1431 (ENKE…KSGD) and 1565-1574 (EQKKKDDVTG). The tract at residues 1464 to 1566 (LDQETFSICK…KKRSQEEEEQ (103 aa)) is CHD1 helical C-terminal domain (CHCT). Residues 1584–1601 (SGSSRDSLISQSHTSHNL) are compositionally biased toward polar residues. Basic and acidic residues-rich tracts occupy residues 1698–1720 (RPYD…DRHH), 1739–1749 (QDFRRMSDHRP), 1760–1772 (DHYR…KLGE), and 1795–1814 (SPHD…RSLE). Serine 1807 is subject to Phosphoserine.

This sequence belongs to the SNF2/RAD54 helicase family. Interacts with MYOD1. Interacts with histone H3.3.

It is found in the nucleus. The catalysed reaction is ATP + H2O = ADP + phosphate + H(+). Functionally, ATP-dependent chromatin-remodeling factor that specifically binds to the promoter of target genes, leading to chromatin remodeling, possibly by promoting deposition of histone H3.3. Involved in myogenesis via interaction with MYOD1: binds to myogenic gene regulatory sequences and mediates incorporation of histone H3.3 prior to the onset of myogenic gene expression, promoting their expression. The sequence is that of Chromodomain-helicase-DNA-binding protein 2 (CHD2) from Homo sapiens (Human).